We begin with the raw amino-acid sequence, 393 residues long: S-adenosylmethionine synthase 4 (393 aa).

E9 contacts Mg(2+). ATP is bound at residue H15. E43 provides a ligand contact to K(+). L-methionine is bound by residues E56 and Q99. Residues 167–169, 235–238, D246, 252–253, A269, K273, and K277 contribute to the ATP site; these read DGK, SGRF, and RK. Position 246 (D246) interacts with L-methionine. K277 provides a ligand contact to L-methionine.

It belongs to the AdoMet synthase family. As to quaternary structure, homotetramer. It depends on Mn(2+) as a cofactor. The cofactor is Mg(2+). Co(2+) is required as a cofactor. K(+) serves as cofactor.

The protein localises to the cytoplasm. It catalyses the reaction L-methionine + ATP + H2O = S-adenosyl-L-methionine + phosphate + diphosphate. It participates in amino-acid biosynthesis; S-adenosyl-L-methionine biosynthesis; S-adenosyl-L-methionine from L-methionine: step 1/1. Functionally, catalyzes the formation of S-adenosylmethionine from methionine and ATP. The reaction comprises two steps that are both catalyzed by the same enzyme: formation of S-adenosylmethionine (AdoMet) and triphosphate, and subsequent hydrolysis of the triphosphate. The sequence is that of S-adenosylmethionine synthase 4 (METK4) from Vitis vinifera (Grape).